The following is a 411-amino-acid chain: Carbohydrate sulfotransferase 1 (411 aa).

Over 1–2 (MQ) the chain is Cytoplasmic. Residues 3-23 (CSWKAVLLLALASIAIQYTAI) traverse the membrane as a helical; Signal-anchor for type II membrane protein segment. At 24 to 411 (RTFTAKSFHT…VEERDFRPFL (388 aa)) the chain is on the lumenal side. The N-linked (GlcNAc...) asparagine glycan is linked to N56. 69-75 (TRSGSSF) contacts 3'-phosphoadenylyl sulfate. N145 and N189 each carry an N-linked (GlcNAc...) asparagine glycan. 234–242 (RDPRGILAS) is a 3'-phosphoadenylyl sulfate binding site. N-linked (GlcNAc...) asparagine glycosylation is present at N334. The short motif at 337-339 (RGD) is the Cell attachment site element.

The protein belongs to the sulfotransferase 1 family. Gal/GlcNAc/GalNAc subfamily. In terms of tissue distribution, broadly expressed with highest levels in central nervous system. Expressed in cortex (at protein level). Expressed in high endothelial venules in peripheral lymph nodes, mesenteric lymph nodes and Peyer's patches.

The protein localises to the golgi apparatus membrane. The enzyme catalyses 3'-phosphoadenylyl sulfate + keratan = adenosine 3',5'-bisphosphate + keratan 6'-sulfate.. It participates in glycan metabolism. Sulfotransferase that utilizes 3'-phospho-5'-adenylyl sulfate (PAPS) as sulfonate donor to catalyze the transfer of sulfate to position 6 of internal galactose (Gal) residues of keratan. Cooperates with B4GALT4 and B3GNT7 glycosyltransferases and CHST6 sulfotransferase to construct and elongate disulfated disaccharide unit [-&gt;3(6-sulfoGalbeta)1-&gt;4(6-sulfoGlcNAcbeta)1-&gt;] within keratan sulfate polymer. Has a preference for sulfating keratan sulfate, but it also transfers sulfate to the unsulfated polymer. Involved in biosynthesis of phosphacan, a major keratan sulfate proteoglycan in the developing brain. Involved in biosynthesis of 6-sulfoGalbeta-containing O-linked glycans in high endothelial venules of lymph nodes. May act in a synergistic manner with CHST4 to generate sialyl 6',6-disulfo Lewis X motif, a recognition determinant for immune cell receptors implicated in leukocyte trafficking. Catalyzes sulfation of N-acetyllactosamine (LacNAc) oligosaccharides with highest efficiency for sialylated LacNAc structures. This Mus musculus (Mouse) protein is Carbohydrate sulfotransferase 1 (Chst1).